A 132-amino-acid polypeptide reads, in one-letter code: C-X-C motif chemokine 5 (132 aa).

The first 40 residues, 1–40 (MSLQLRSSARIPSGSISPFMRMAPLAFLLLFTLPQHLAEA), serve as a signal peptide directing secretion. 2 disulfides stabilise this stretch: cysteine 53–cysteine 79 and cysteine 55–cysteine 95.

Belongs to the intercrine alpha (chemokine CxC) family. In terms of assembly, monomer. Homodimer. GCP-2(1-78) and GCP-2(9-78) are produced by proteolytic cleavage after secretion from fibroblasts and epithelial cells. GCP-2(9-78) is the most prominent form. A number of additional N-terminal (processed between pos. 41 and 48) and C-terminal (processed between pos. 118 and 132) processed forms have been identified, probably also representing intermediate states.

The protein resides in the secreted. May participate in the recruitment of inflammatory cells by injured or infected tissue. GCP-2(1-78) and, more potent, GCP-2(9-78) attract neutrophils and are involved in neutrophil activation. The protein is C-X-C motif chemokine 5 (Cxcl5) of Mus musculus (Mouse).